The sequence spans 383 residues: MAKTDYYELLGVSRGASADELKKAYRKLAMQYHPDRNPGDAAAEQKFKDINEAYDVLKDEQKRAAYDRFGHAAFENGGGPGAGGFGGGFGGFGGFEGGIGDIFEQMFGEAMGGRRGGRTERAGADLRAAVEIDLTQAFTGTKTEIRVPTRVSCDACSGTGSADKSAANDTCPTCGGAGRVRAQQGFFVVERTCPTCGGAGRTVRNPCRVCSGAGTVPRERTLSVTIPAGVEDGTRIRLSGEGEAGGRGASPGDLYVHVSIRPHPIFQRDGANVFCRVPLRMAQAALGGEIEVPAIDGTRARVKIPAGTQTGDQFRLRGKGFSVLRSTARGDMYIQVAVETPQNLTKRQRELLEEFEREAGNTASGSPEHEGFFAKVKEFFDGL.

The region spanning 5 to 70 (DYYELLGVSR…QKRAAYDRFG (66 aa)) is the J domain. A CR-type zinc finger spans residues 140-219 (GTKTEIRVPT…CSGAGTVPRE (80 aa)). Residues cysteine 153, cysteine 156, cysteine 171, cysteine 174, cysteine 193, cysteine 196, cysteine 207, and cysteine 210 each contribute to the Zn(2+) site. 4 CXXCXGXG motif repeats span residues 153–160 (CDACSGTG), 171–178 (CPTCGGAG), 193–200 (CPTCGGAG), and 207–214 (CRVCSGAG).

The protein belongs to the DnaJ family. Homodimer. Requires Zn(2+) as cofactor.

The protein localises to the cytoplasm. In terms of biological role, participates actively in the response to hyperosmotic and heat shock by preventing the aggregation of stress-denatured proteins and by disaggregating proteins, also in an autonomous, DnaK-independent fashion. Unfolded proteins bind initially to DnaJ; upon interaction with the DnaJ-bound protein, DnaK hydrolyzes its bound ATP, resulting in the formation of a stable complex. GrpE releases ADP from DnaK; ATP binding to DnaK triggers the release of the substrate protein, thus completing the reaction cycle. Several rounds of ATP-dependent interactions between DnaJ, DnaK and GrpE are required for fully efficient folding. Also involved, together with DnaK and GrpE, in the DNA replication of plasmids through activation of initiation proteins. This chain is Chaperone protein DnaJ, found in Acidiphilium cryptum (strain JF-5).